The primary structure comprises 242 residues: ATP synthase subunit a, organellar chromatophore (242 aa).

5 consecutive transmembrane segments (helical) span residues 28-48 (LHGQ…VLVI), 89-109 (LPFI…GALV), 128-148 (INTT…AGLS), 193-213 (LVVG…AMFL), and 214-234 (GLFT…NYIG).

It belongs to the ATPase A chain family. As to quaternary structure, F-type ATPases have 2 components, CF(1) - the catalytic core - and CF(0) - the membrane proton channel. CF(1) has five subunits: alpha(3), beta(3), gamma(1), delta(1), epsilon(1). CF(0) has four main subunits: a, b, b' and c.

The protein resides in the plastid. The protein localises to the organellar chromatophore thylakoid membrane. In terms of biological role, key component of the proton channel; it plays a direct role in the translocation of protons across the membrane. The protein is ATP synthase subunit a, organellar chromatophore of Paulinella chromatophora.